The following is a 1481-amino-acid chain: ABC-type transporter braE (1481 aa).

6 consecutive transmembrane segments (helical) span residues 27–47, 86–106, 130–150, 159–179, 269–289, and 308–328; these read FTVKFEQLCFSLTPAAIFILA, LILITVLPFGASGIDIISSAL, IFLSAYLFFTLLFDIAQARTY, EIAFTAIFTAALAMKIAMLLL, LYVPMILPIPAKLAAIGSFFC, and PANIGYGFIGASICIYSVIAI. The ABC transmembrane type-1 1 domain occupies 281-549; it reads LAAIGSFFCQ…LLETLPQMAA (269 aa). An N-linked (GlcNAc...) asparagine glycan is attached at N367. The next 3 membrane-spanning stretches (helical) occupy residues 389-409, 410-430, and 491-511; these read ELWGNVIEVALSAWLLYNLLG, VAFIAPIVVVCICVGGVSFFM, and LMLTCSVFAYIPLLLSPPITF. In terms of domain architecture, ABC transporter 1 spans 594 to 823; sequence VAIKDGSFGW…QSYIHSLGVK (230 aa). Residue 627–634 participates in ATP binding; it reads GPIASGKS. N-linked (GlcNAc...) asparagine glycans are attached at residues N671 and N813. 6 consecutive transmembrane segments (helical) span residues 887 to 907, 928 to 948, 1001 to 1021, 1026 to 1046, 1111 to 1131, and 1144 to 1164; these read IAIFTSGLLYGFFYNFPTIWL, AIYAVLEVCAMLSLIWLGVLL, SALLNVIYMVFVGIGQAAVIA, YLAISYPFLFGMLYVVQKFYL, LHFVLNVVVAIIAVMLTSLAV, and LVTLMSFGEMLSGVVIYYTAL. One can recognise an ABC transmembrane type-1 2 domain in the interval 887–1166; the sequence is IAIFTSGLLY…VVIYYTALET (280 aa). N-linked (GlcNAc...) asparagine glycans are attached at residues N1207 and N1232. The ABC transporter 2 domain occupies 1224 to 1477; sequence LTTNELSSND…PGTRFGELWS (254 aa). Residue 1260–1267 coordinates ATP; sequence GRTGSGKS. Residues N1330 and N1364 are each glycosylated (N-linked (GlcNAc...) asparagine).

It belongs to the ABC transporter superfamily. ABCC family. Conjugate transporter (TC 3.A.1.208) subfamily.

It is found in the membrane. In terms of biological role, ABC-type transporter; part of the gene cluster that mediates the biosynthesis of the brasilane terpene glycosides brasilane D and E. This chain is ABC-type transporter braE, found in Annulohypoxylon truncatum (Hypoxylon truncatum).